Reading from the N-terminus, the 119-residue chain is Ribosome-binding factor A (119 aa).

It belongs to the RbfA family. As to quaternary structure, monomer. Binds 30S ribosomal subunits, but not 50S ribosomal subunits or 70S ribosomes.

It localises to the cytoplasm. One of several proteins that assist in the late maturation steps of the functional core of the 30S ribosomal subunit. Associates with free 30S ribosomal subunits (but not with 30S subunits that are part of 70S ribosomes or polysomes). Required for efficient processing of 16S rRNA. May interact with the 5'-terminal helix region of 16S rRNA. This chain is Ribosome-binding factor A, found in Lactococcus lactis subsp. cremoris (strain SK11).